Here is a 540-residue protein sequence, read N- to C-terminus: Serine/threonine-protein phosphatase ppzA (540 aa).

Disordered regions lie at residues 1–108 (MGQS…KRGH) and 120–140 (VDHV…STQK). Polar residues-rich tracts occupy residues 15–24 (SLQSYPSFSR) and 45–54 (SDSPRGSTAG). Residues 62 to 88 (AASVKSTTSRRSSTNQSVQSPDDTPSQ) are compositionally biased toward low complexity. A compositionally biased stretch (pro residues) spans 89 to 98 (PDAPEPPPSP). Over residues 127–136 (PPTGAAPTGP) the composition is skewed to low complexity. 4 residues coordinate Mn(2+): D239, H241, D267, and N299. Residues 258 to 540 (PASNYLFLGD…SLVTSWGISR (283 aa)) enclose the Phosphatase tensin-type domain. Residue H300 is the Proton donor of the active site. H348 and H423 together coordinate Mn(2+).

The protein belongs to the PPP phosphatase family. PP-Z subfamily. As to quaternary structure, interacts with at least 54 proteins, of which 31 are detected only after iron starvation and 22 are detected only in control conditions. Only the regulatory subunit of the protein phosphatase PP1 (Afu1g04800/AFUB_005140) interacts with ppzA in both conditions. Requires Mn(2+) as cofactor.

It localises to the cytoplasm. It carries out the reaction O-phospho-L-seryl-[protein] + H2O = L-seryl-[protein] + phosphate. The catalysed reaction is O-phospho-L-threonyl-[protein] + H2O = L-threonyl-[protein] + phosphate. Functionally, catalytic subunit of protein phosphatase Z (PPZ) involved in iron assimilation. Regulates secondary metabolites production, including gliotoxin, pyripyropene A, fumagillin, fumiquinazoline A, triacetyl-fusarinine C, and helvolic acid. Plays a key role in pathogenicity. This is Serine/threonine-protein phosphatase ppzA from Aspergillus fumigatus (strain CBS 144.89 / FGSC A1163 / CEA10) (Neosartorya fumigata).